The chain runs to 78 residues: Large ribosomal subunit protein bL28 (78 aa).

It belongs to the bacterial ribosomal protein bL28 family.

This is Large ribosomal subunit protein bL28 from Leifsonia xyli subsp. xyli (strain CTCB07).